The primary structure comprises 49 residues: Large ribosomal subunit protein bL33 (49 aa).

It belongs to the bacterial ribosomal protein bL33 family.

The protein is Large ribosomal subunit protein bL33 of Desulfitobacterium hafniense (strain Y51).